We begin with the raw amino-acid sequence, 233 residues long: Homeobox protein EMX1 (233 aa).

The homeobox DNA-binding region spans 135-194 (PKRIRTAFSPSQLLRLERAFEKNHYVVGAERKQLASSLSLSETQVKVWFQNRRTKYKRQK). Positions 192 to 233 (RQKLEEEGPDSDQKKKGSHHINRWRLATKQPNGEDIDVTSND) are disordered. Basic and acidic residues predominate over residues 193 to 206 (QKLEEEGPDSDQKK).

Belongs to the EMX homeobox family.

It localises to the nucleus. May function in combinations with OTX1/2 to specify cell fates in the developing central nervous system. The polypeptide is Homeobox protein EMX1 (emx1) (Xenopus tropicalis (Western clawed frog)).